Consider the following 546-residue polypeptide: Chaperonin GroEL (546 aa).

ATP contacts are provided by residues 30-33 (TLGP), lysine 51, 87-91 (DGTTT), glycine 415, 479-481 (NAA), and aspartate 495. The disordered stretch occupies residues 526 to 546 (KKDEPAMPAGGGMGGMGGMDF). Over residues 534 to 546 (AGGGMGGMGGMDF) the composition is skewed to gly residues.

Belongs to the chaperonin (HSP60) family. In terms of assembly, forms a cylinder of 14 subunits composed of two heptameric rings stacked back-to-back. Interacts with the co-chaperonin GroES.

The protein resides in the cytoplasm. The enzyme catalyses ATP + H2O + a folded polypeptide = ADP + phosphate + an unfolded polypeptide.. In terms of biological role, together with its co-chaperonin GroES, plays an essential role in assisting protein folding. The GroEL-GroES system forms a nano-cage that allows encapsulation of the non-native substrate proteins and provides a physical environment optimized to promote and accelerate protein folding. The sequence is that of Chaperonin GroEL from Xanthomonas euvesicatoria pv. vesicatoria (strain 85-10) (Xanthomonas campestris pv. vesicatoria).